Reading from the N-terminus, the 406-residue chain is UPF0754 membrane protein SYNPCC7002_A1087 (406 aa).

The chain crosses the membrane as a helical span at residues 384–404 (IVNLGGVLGFLVGVAQSVILL).

This sequence belongs to the UPF0754 family.

The protein resides in the cell inner membrane. In Picosynechococcus sp. (strain ATCC 27264 / PCC 7002 / PR-6) (Agmenellum quadruplicatum), this protein is UPF0754 membrane protein SYNPCC7002_A1087.